Here is a 228-residue protein sequence, read N- to C-terminus: Thermonuclease (228 aa).

The first 23 residues, 1 to 23, serve as a signal peptide directing secretion; it reads MTEYLLSAGICMAIVSILLIGMA. A propeptide spanning residues 24–60 is cleaved from the precursor; that stretch reads ISNVSKEQYAKRFFFFATSCLVLTLVVASSLSSSANA. Residue Asp-100 coordinates Ca(2+). Residue Arg-114 is part of the active site. Residues Asp-119 and Thr-120 each coordinate Ca(2+). Active-site residues include Glu-122 and Arg-166.

It belongs to the thermonuclease family. Requires Ca(2+) as cofactor.

It is found in the secreted. The catalysed reaction is Endonucleolytic cleavage to nucleoside 3'-phosphates and 3'-phosphooligonucleotide end-products.. In terms of biological role, enzyme that catalyzes the hydrolysis of both DNA and RNA at the 5' position of the phosphodiester bond. This is Thermonuclease (nuc) from Staphylococcus aureus (strain MRSA252).